The sequence spans 474 residues: Aspartyl protease family protein At5g10770 (474 aa).

Positions 1–25 (MSINRNLLNIIIILCICLNLGCNDG) are cleaved as a signal peptide. In terms of domain architecture, Peptidase A1 spans 132–469 (YIVTVGLGTP…DGAGGRVGFA (338 aa)). Catalysis depends on residues D150 and D352. Cysteines 391 and 432 form a disulfide. N443 is lipidated: GPI-anchor amidated asparagine. Positions 444 to 474 (AAIFGNVQQQTLEVVYDGAGGRVGFAPNGCS) are cleaved as a propeptide — removed in mature form.

Belongs to the peptidase A1 family.

The protein resides in the cell membrane. In terms of biological role, probably not redundant with AED1 and not involved in restriction of salicylic acid (SA) or systemic acquired resistance (SAR) signaling. In Arabidopsis thaliana (Mouse-ear cress), this protein is Aspartyl protease family protein At5g10770.